The primary structure comprises 324 residues: Large ribosomal subunit protein uL3m (324 aa).

Residues Met1–Phe41 constitute a mitochondrion transit peptide. A disordered region spans residues Pro206 to Lys229.

It belongs to the universal ribosomal protein uL3 family. In terms of assembly, part of the 50S ribosomal subunit.

It localises to the mitochondrion. One of the primary rRNA binding proteins, it binds directly near the 3'-end of the 23S rRNA, where it nucleates assembly of the 50S subunit. This Arabidopsis thaliana (Mouse-ear cress) protein is Large ribosomal subunit protein uL3m.